A 127-amino-acid chain; its full sequence is Small ribosomal subunit protein uS11 (127 aa).

It belongs to the universal ribosomal protein uS11 family. As to quaternary structure, part of the 30S ribosomal subunit. Interacts with proteins S7 and S18. Binds to IF-3.

Functionally, located on the platform of the 30S subunit, it bridges several disparate RNA helices of the 16S rRNA. Forms part of the Shine-Dalgarno cleft in the 70S ribosome. The chain is Small ribosomal subunit protein uS11 from Chlorobium phaeobacteroides (strain BS1).